We begin with the raw amino-acid sequence, 113 residues long: U11-theraphotoxin-Hhn1k (113 aa).

The N-terminal stretch at methionine 1–alanine 21 is a signal peptide. A propeptide spanning residues aspartate 22–arginine 74 is cleaved from the precursor. A disordered region spans residues glutamate 61–aspartate 83. 3 disulfides stabilise this stretch: cysteine 75/cysteine 90, cysteine 82/cysteine 95, and cysteine 89/cysteine 110.

It belongs to the neurotoxin 14 (magi-1) family. 01 (HNTX-16) subfamily. Expressed by the venom gland.

The protein localises to the secreted. Probable ion channel inhibitor. This is U11-theraphotoxin-Hhn1k from Cyriopagopus hainanus (Chinese bird spider).